A 316-amino-acid polypeptide reads, in one-letter code: Biotin synthase (316 aa).

In terms of domain architecture, Radical SAM core spans 42 to 268 (LCGESVDLCT…INPTAYIRMA (227 aa)). The [4Fe-4S] cluster site is built by C60, C64, and C67. 4 residues coordinate [2Fe-2S] cluster: S104, C136, C196, and R266.

This sequence belongs to the radical SAM superfamily. Biotin synthase family. In terms of assembly, homodimer. [4Fe-4S] cluster is required as a cofactor. The cofactor is [2Fe-2S] cluster.

It catalyses the reaction (4R,5S)-dethiobiotin + (sulfur carrier)-SH + 2 reduced [2Fe-2S]-[ferredoxin] + 2 S-adenosyl-L-methionine = (sulfur carrier)-H + biotin + 2 5'-deoxyadenosine + 2 L-methionine + 2 oxidized [2Fe-2S]-[ferredoxin]. Its pathway is cofactor biosynthesis; biotin biosynthesis; biotin from 7,8-diaminononanoate: step 2/2. Its function is as follows. Catalyzes the conversion of dethiobiotin (DTB) to biotin by the insertion of a sulfur atom into dethiobiotin via a radical-based mechanism. In Clostridium beijerinckii (strain ATCC 51743 / NCIMB 8052) (Clostridium acetobutylicum), this protein is Biotin synthase.